A 53-amino-acid polypeptide reads, in one-letter code: uncharacterized protein (53 aa).

Residues 14-33 are compositionally biased toward low complexity; sequence SPSSLNNNNNINSKSLQINS. A disordered region spans residues 14 to 53; that stretch reads SPSSLNNNNNINSKSLQINSENKSKIQNNNPLGNKGGVQF.

This is an uncharacterized protein from Dictyostelium discoideum (Social amoeba).